The sequence spans 315 residues: Zinc metalloproteinase nas-4 (315 aa).

The first 20 residues, 1 to 20 (MMTIQRYSLVFCAIFATCWT), serve as a signal peptide directing secretion. The N-linked (GlcNAc...) asparagine glycan is linked to N71. One can recognise a Peptidase M12A domain in the interval 95-290 (NAIKQIYRRW…RKINKLYNCP (196 aa)). 2 disulfides stabilise this stretch: C137–C289 and C160–C179. H187 is a binding site for Zn(2+). Residue E188 is part of the active site. Residues H191 and H197 each contribute to the Zn(2+) site. A disordered region spans residues 291–315 (GVSGNNNNNNNNQINSNSIVNHPQV).

It depends on Zn(2+) as a cofactor. As to expression, digestive tract. Found in the pharynx cells of the procorpus, metacorpus, isthmus and terminal bulb, and in the terminal bulb lumen.

It localises to the secreted. Metalloprotease. May be involved in digestion. The protein is Zinc metalloproteinase nas-4 (nas-4) of Caenorhabditis elegans.